The following is a 356-amino-acid chain: MNFNYLIKNNILNLKPYQSARRLKHSGKIWLNANEYPIAPYYKGQYKNINRYPECQPPELINNYAAYSGVQSDHILVSRGADESIELLMKVFCRPNKDFIIFCPPTYGMYKTNAEILEIYYRMIPTKKNWQLDLSSIQSQLNNVKLIYICNPNNPTGNIIYLHSLKKLLKIIQNKALLVCDEAYIDFCRHASLIQLLTEYPNLIILRTLSKAFALAGLRCGFTLANPKIINLLTKVITPYPIPTPVIDIATQALTPQNIQYTQTRIKKIHNNRNMLIKALKQCSCVQQIFPSYTNYILVKFYPQYQVFKTLLNQGIVLRDQSYQPGLMHCLRITIGSYNECQLVISTLKKLKHSTF.

K211 is modified (N6-(pyridoxal phosphate)lysine).

It belongs to the class-II pyridoxal-phosphate-dependent aminotransferase family. Histidinol-phosphate aminotransferase subfamily. Homodimer. Pyridoxal 5'-phosphate serves as cofactor.

The catalysed reaction is L-histidinol phosphate + 2-oxoglutarate = 3-(imidazol-4-yl)-2-oxopropyl phosphate + L-glutamate. It functions in the pathway amino-acid biosynthesis; L-histidine biosynthesis; L-histidine from 5-phospho-alpha-D-ribose 1-diphosphate: step 7/9. The sequence is that of Histidinol-phosphate aminotransferase from Blochmanniella floridana.